A 355-amino-acid polypeptide reads, in one-letter code: NADH-quinone oxidoreductase subunit H (355 aa).

A run of 8 helical transmembrane segments spans residues 17-37 (IIMVAESVLVLVVLLVAIAYI), 86-106 (GVFLLAPLVSCVLALAAWAVI), 119-139 (VGILFIFAISSLSIYGIIMAG), 165-185 (IGFVIITVLLCAGTLNLSAVV), 204-224 (ILNWYVWPLFPMFVVFYVSAL), 262-282 (YVAIVTMCAMATILFLGGWLP), 291-311 (WVPGIIWFLLKVFFMFFLFAM), and 332-352 (FLPLSLAMVIVVAGVLHFAGI).

Belongs to the complex I subunit 1 family. NDH-1 is composed of 14 different subunits. Subunits NuoA, H, J, K, L, M, N constitute the membrane sector of the complex.

The protein resides in the cell inner membrane. The catalysed reaction is a quinone + NADH + 5 H(+)(in) = a quinol + NAD(+) + 4 H(+)(out). In terms of biological role, NDH-1 shuttles electrons from NADH, via FMN and iron-sulfur (Fe-S) centers, to quinones in the respiratory chain. The immediate electron acceptor for the enzyme in this species is believed to be ubiquinone. Couples the redox reaction to proton translocation (for every two electrons transferred, four hydrogen ions are translocated across the cytoplasmic membrane), and thus conserves the redox energy in a proton gradient. This subunit may bind ubiquinone. This Bradyrhizobium diazoefficiens (strain JCM 10833 / BCRC 13528 / IAM 13628 / NBRC 14792 / USDA 110) protein is NADH-quinone oxidoreductase subunit H.